The chain runs to 776 residues: Isoamylase (776 aa).

An N-terminal signal peptide occupies residues 1-26; that stretch reads MKCPKILAALLGCAVLAGVPAMPAHA. Residues Asp154, Glu255, Thr256, Asn258, and Asp285 each contribute to the Ca(2+) site. The Nucleophile role is filled by Asp401. Cys410 and Cys422 form a disulfide bridge. The Proton donor role is filled by Glu461. Disulfide bonds link Cys546/Cys616 and Cys738/Cys766.

This sequence belongs to the glycosyl hydrolase 13 family. Monomer. Ca(2+) serves as cofactor.

The catalysed reaction is Hydrolysis of (1-&gt;6)-alpha-D-glucosidic branch linkages in glycogen, amylopectin and their beta-limit dextrins.. The chain is Isoamylase (iam) from Pseudomonas sp. (strain SMP1).